A 572-amino-acid chain; its full sequence is Sulfite reductase [NADPH] hemoprotein beta-component (572 aa).

C437, C443, C482, and C486 together coordinate [4Fe-4S] cluster. C486 lines the siroheme pocket.

The protein belongs to the nitrite and sulfite reductase 4Fe-4S domain family. As to quaternary structure, alpha(8)-beta(8). The alpha component is a flavoprotein, the beta component is a hemoprotein. The cofactor is siroheme. It depends on [4Fe-4S] cluster as a cofactor.

It catalyses the reaction hydrogen sulfide + 3 NADP(+) + 3 H2O = sulfite + 3 NADPH + 4 H(+). Its pathway is sulfur metabolism; hydrogen sulfide biosynthesis; hydrogen sulfide from sulfite (NADPH route): step 1/1. Its function is as follows. Component of the sulfite reductase complex that catalyzes the 6-electron reduction of sulfite to sulfide. This is one of several activities required for the biosynthesis of L-cysteine from sulfate. The protein is Sulfite reductase [NADPH] hemoprotein beta-component of Bacillus licheniformis (strain ATCC 14580 / DSM 13 / JCM 2505 / CCUG 7422 / NBRC 12200 / NCIMB 9375 / NCTC 10341 / NRRL NRS-1264 / Gibson 46).